The chain runs to 377 residues: Flagellar P-ring protein (377 aa).

Positions 1 to 33 (MRYPVSTGIAAPAWFAFFCAWAGLWTFSLPVQA) are cleaved as a signal peptide.

Belongs to the FlgI family. As to quaternary structure, the basal body constitutes a major portion of the flagellar organelle and consists of four rings (L,P,S, and M) mounted on a central rod.

It is found in the periplasm. The protein resides in the bacterial flagellum basal body. Assembles around the rod to form the L-ring and probably protects the motor/basal body from shearing forces during rotation. This is Flagellar P-ring protein from Nitrosospira multiformis (strain ATCC 25196 / NCIMB 11849 / C 71).